The chain runs to 498 residues: Lysine--tRNA ligase (498 aa).

2 residues coordinate Mg(2+): E401 and E408.

Belongs to the class-II aminoacyl-tRNA synthetase family. In terms of assembly, homodimer. The cofactor is Mg(2+).

The protein localises to the cytoplasm. It carries out the reaction tRNA(Lys) + L-lysine + ATP = L-lysyl-tRNA(Lys) + AMP + diphosphate. This is Lysine--tRNA ligase from Dehalococcoides mccartyi (strain CBDB1).